The primary structure comprises 1431 residues: Caskin-1 (1431 aa).

6 ANK repeats span residues 48 to 77 (DGFSALHHAALNGNTELISLLLEAQAAVDI), 81 to 110 (KGMRPLHYAAWQGRKEPMKLVLKAGSAVNV), 114 to 143 (EGHIPLHLAAQHGHYDVSEMLLQHQSNPCM), 147 to 176 (SGKTPLDLACEFGRVGVVQLLLSSNMCAAL), 188 to 217 (NGTSPLHLAAKNGHIDIIRLLLQAGIDINR), and 220 to 249 (KSGTALHEAALCGKTEVVRLLLDSGINAQV). A Phosphotyrosine modification is found at Tyr253. The SH3 domain occupies 281 to 347 (SAALQVRATK…PSSLGEAIVK (67 aa)). A disordered region spans residues 348 to 372 (RAGSRTGSEPSPPQGGGSLGPSAPP). A Phosphoserine modification is found at Ser358. The CASK-binding stretch occupies residues 375-471 (IWVLRKPFAG…PKKLESASAS (97 aa)). Arg398 carries the omega-N-methylarginine modification. Polar residues predominate over residues 420 to 430 (SQKSVSESSPG). The disordered stretch occupies residues 420–471 (SQKSVSESSPGDSPVKPPEGSSGAARSQPPAAHAGQVYGEQPPKKLESASAS). Phosphoserine occurs at positions 423 and 432. SAM domains lie at 476 to 539 (KSAE…LNIP) and 545 to 609 (HKPA…LAEL). Phosphoserine is present on residues Ser637 and Ser650. Positions 669–679 (LSGPAEAGAAA) are enriched in low complexity. 2 disordered regions span residues 669–1000 (LSGP…TGSA) and 1016–1041 (GGGGRAIRRPPEGHPTPRPASPEPGR). Positions 692 to 712 (RTTSRESSLSGRARHISSSQE) are enriched in polar residues. Residues Ser723 and Ser728 each carry the phosphoserine modification. Thr741 carries the phosphothreonine modification. Ser791 carries the post-translational modification Phosphoserine. A compositionally biased stretch (pro residues) spans 848–860 (PPAPGPAPPPVPA). Ser891, Ser893, and Ser989 each carry phosphoserine. A compositionally biased stretch (pro residues) spans 1028 to 1037 (GHPTPRPASP). Position 1067 is a phosphothreonine (Thr1067). Position 1069 is a phosphoserine (Ser1069). 2 disordered regions span residues 1072 to 1372 (VTGL…RQKL) and 1389 to 1410 (KIRQEDGQGPRPSSIEEKSTGS). Basic and acidic residues predominate over residues 1148-1160 (DTVKRRPKAKEPD). The segment covering 1191-1215 (PELPPPPPPAEPPPADLMQLPPLPL) has biased composition (pro residues). The span at 1236–1247 (QPVSKIQGSPTP) shows a compositional bias: polar residues. Position 1259 is a phosphoserine (Ser1259). Thr1268 is modified (phosphothreonine). A compositionally biased stretch (pro residues) spans 1268–1283 (TPPPVSPKPPPPPTAP). Composition is skewed to low complexity over residues 1284-1299 (KPAKALAGLQSSSATP), 1309-1327 (PPAALIKPASSPPSQSASP), and 1345-1359 (PRAAASVVSGPPVAS). Position 1363 is a phosphoserine (Ser1363). A compositionally biased stretch (basic and acidic residues) spans 1389-1407 (KIRQEDGQGPRPSSIEEKS).

Binds the CaM kinase domain of CASK. Forms a ternary complex with CASK and LIN7A, LIN7B or LIN7C. Competes with APBA1 that forms a similar complex with CASK and LIN7 proteins. The tripartite complex CASKIN1/CASK/LIN7(A/B/C) binds the cytoplasmic tail of NRXN1. Polymerizes, via the tandem SAM domains, to form long, 8 nM wide fibers, upon which other proteins can assemble.

The protein resides in the cytoplasm. Functionally, may link the scaffolding protein CASK to downstream intracellular effectors. This is Caskin-1 (Caskin1) from Mus musculus (Mouse).